The chain runs to 147 residues: UPF0306 protein YhbP (147 aa).

Belongs to the UPF0306 family.

The polypeptide is UPF0306 protein YhbP (Escherichia coli O157:H7).